A 321-amino-acid polypeptide reads, in one-letter code: GDP-L-fucose synthase (321 aa).

NADP(+)-binding positions include 10-16 (GHRGMVG), 36-41 (RDELNL), and 105-108 (LGSS). The active-site Proton donor/acceptor is Tyr-136. NADP(+) is bound by residues Lys-140, 163-166 (PTNL), and His-179. Substrate is bound by residues Arg-187, Trp-202, Arg-209, and Asp-278.

The protein belongs to the NAD(P)-dependent epimerase/dehydratase family. Fucose synthase subfamily. In terms of assembly, homodimer.

The protein localises to the cytoplasm. It carries out the reaction GDP-beta-L-fucose + NADP(+) = GDP-4-dehydro-alpha-D-rhamnose + NADPH + H(+). It participates in nucleotide-sugar biosynthesis; GDP-L-fucose biosynthesis via de novo pathway; GDP-L-fucose from GDP-alpha-D-mannose: step 2/2. The protein operates within exopolysaccharide biosynthesis; colanic acid biosynthesis. With respect to regulation, subject to product inhibition by NADP and GDP-fucose. Catalyzes the two-step NADP-dependent conversion of GDP-4-dehydro-6-deoxy-D-mannose to GDP-fucose, involving an epimerase and a reductase reaction. In Escherichia coli (strain K12), this protein is GDP-L-fucose synthase.